The chain runs to 1392 residues: MEVLMAERANLVFHNKAIDGTAMKRLISRLIEHFGMAYTSHILDQVKTLGFQQATATSISLGIDDLLTIPSKGWLVQDAEQQSLILEKHHHYGNVHAVEKLRQSIEIWYATSEYLRQEMNPNFRMTDPFNPVHIMSFSGARGNASQVHQLVGMRGLMSDPQGQMIDLPIQSNLREGLSLTEYIISCYGARKGVVDTAVRTSDAGYLTRRLVEVVQHIVVRRTDCGTARGISVSPRNGIMPERIFSQTLIGRVLADDIYMGSRCIATRNQAIGIGLVNRFITFRAQPISIRTPFTCRSTSWICRLCYGRSPTHGDLVELGEAVGIIAGQSIGEPGTQLTLRTFHTGGVFTGGTAEHVRAPSNGKIKFNEDLVHPTRTRHGHPAFLCSIDLYVTIESEDILHNVNIPPKSLLLVQNDQYVESEQVIAEIRAGISTLNFKEKVRKHIYSDSDGEMHWSTDVYHAPEFTYGNVHLLPKTSHLWILLGGPCRSSLVYLSIHKDQDQMNAHSLSGKPRYTSNLSVTNDQARQKLFSSDFYGQKEDRIPDYSDLNRIICTGQYNLVYSPILHGNSDLLSKRRRNKFIIPLHSIQELENELMPCSGISIEIPVNGIFRRNSILAYFDDPRYRRKSSGIIKYGTIETHSVIKKEDLIEYRGVKEFRPKYQMKVDRFFFIPEEVHILPGSSSIMVRNNSIVGVDTQITLNLRSRVGGLVRVERKKKRIELKIFSGDIHFPGETDKISRHTGVLIPPGTGKRNSKEYKKVKNWIYVQRITPSKKRFFVLVRPVVTYEITDGINLGTLFPPDPLQERDNVQLRIVNYILYGNGKPIRGISDTSIQLVRTCLVLNWNQDKKSSSCEEARASFVEIRTNGLIRHFLRINLVKSPISYIGKRNDPSGSGLLSDNGSDCTNINPFSAIYSYSKAKIQQSLNQPQGTIHTLLNRNKECQSLIILSAANCSRMEPFKDVKYHSVIKESIKKDPLIPIRNSLGPLGTCLPIENFYSSYHLITHNQILVTKYLQLDNLKQTFQVIKLKYYLMDENGKIFNPDPCRNIILNPFNLNWSFLHHNYCAETSKIISLGQFICENVCIAKNGPPLKSGQVILVQVDSIVIRSAKPYLATPGATVHGHYGETLYEGDTLVTFIYEKSRSGDITQGLPKVEQVLEVRSIDSISMNLEKRVESWNKCIPRILGIPWGFLIGAELTIAQSRISLVNKIQQVYRSQGVQIHNRHIEIIVRQITSKVLISEDGMSNVFSPGELIGLLRAERMGRALEEAICYRVVLLGITRASLNTQSFISEASFQETARVLAKAALRGRIDWLKGLKENVVLGGVIPVGTGFKGLVHPSKQHNNIPLETKKTNLFEGEMRDILFHHRKLFDSCLSKKFHDIPEQSFIGFNDS.

Zn(2+) is bound by residues C224, C295, C302, and C305.

Belongs to the RNA polymerase beta' chain family. RpoC2 subfamily. As to quaternary structure, in plastids the minimal PEP RNA polymerase catalytic core is composed of four subunits: alpha, beta, beta', and beta''. When a (nuclear-encoded) sigma factor is associated with the core the holoenzyme is formed, which can initiate transcription. Zn(2+) is required as a cofactor.

The protein resides in the plastid. It localises to the chloroplast. It carries out the reaction RNA(n) + a ribonucleoside 5'-triphosphate = RNA(n+1) + diphosphate. In terms of biological role, DNA-dependent RNA polymerase catalyzes the transcription of DNA into RNA using the four ribonucleoside triphosphates as substrates. The polypeptide is DNA-directed RNA polymerase subunit beta'' (Solanum bulbocastanum (Wild potato)).